The following is a 397-amino-acid chain: Succinate--CoA ligase [ADP-forming] subunit beta (397 aa).

The region spanning 9-254 is the ATP-grasp domain; the sequence is KALLKGYGAP…ETEEDAKEIE (246 aa). Residues Lys46, 53-55, Glu109, Ala112, and Glu117 contribute to the ATP site; that span reads GRG. Mg(2+) contacts are provided by Asn209 and Asp223. Residues Asn274 and 331-333 contribute to the substrate site; that span reads GIM.

This sequence belongs to the succinate/malate CoA ligase beta subunit family. In terms of assembly, heterotetramer of two alpha and two beta subunits. The cofactor is Mg(2+).

It catalyses the reaction succinate + ATP + CoA = succinyl-CoA + ADP + phosphate. The catalysed reaction is GTP + succinate + CoA = succinyl-CoA + GDP + phosphate. It functions in the pathway carbohydrate metabolism; tricarboxylic acid cycle; succinate from succinyl-CoA (ligase route): step 1/1. Functionally, succinyl-CoA synthetase functions in the citric acid cycle (TCA), coupling the hydrolysis of succinyl-CoA to the synthesis of either ATP or GTP and thus represents the only step of substrate-level phosphorylation in the TCA. The beta subunit provides nucleotide specificity of the enzyme and binds the substrate succinate, while the binding sites for coenzyme A and phosphate are found in the alpha subunit. This chain is Succinate--CoA ligase [ADP-forming] subunit beta, found in Agrobacterium fabrum (strain C58 / ATCC 33970) (Agrobacterium tumefaciens (strain C58)).